Reading from the N-terminus, the 240-residue chain is Protein MGARP (240 aa).

At 1-45 the chain is on the cytoplasmic side; that stretch reads MYLRRAVSKTLALPLRAPPGPAPLRKDASLRWISSNKFPGSSGSN. The chain crosses the membrane as a helical; Anchor for type IV membrane protein span at residues 46–64; the sequence is MIYYLVVGVTVSAGGYYTY. At 65 to 240 the chain is on the mitochondrial intermembrane side; sequence KRVTSGKAKR…AGSEAASAQG (176 aa). The interval 72-240 is disordered; it reads AKRSDHVTDL…AGSEAASAQG (169 aa). Over residues 73–87 the composition is skewed to basic and acidic residues; the sequence is KRSDHVTDLKEKTKA. 2 stretches are compositionally biased toward low complexity: residues 166 to 183 and 228 to 240; these read TVETTEVSTETTSEVTST and EACAGSEAASAQG.

Interacts with RHOT1/Miro-1, RHOT2/Miro-2, TRAK1/OIP106 and TRAK2/GRIF1.

The protein localises to the mitochondrion. The protein resides in the mitochondrion outer membrane. Its subcellular location is the mitochondrion inner membrane. Its function is as follows. Plays a role in the trafficking of mitochondria along microtubules. Regulates the kinesin-mediated axonal transport of mitochondria to nerve terminals along microtubules during hypoxia. Participates in the translocation of TRAK2/GRIF1 from the cytoplasm to the mitochondrion. Also plays a role in steroidogenesis through maintenance of mitochondrial abundance and morphology. Plays an inhibitory role during neocortex development by regulating mitochondrial morphology, distribution and motility in neocortical neurons. This chain is Protein MGARP (MGARP), found in Bos taurus (Bovine).